The primary structure comprises 119 residues: MIVGIGIDIIELNRIEKMLDGKLKFMERILTENERNVAKGLKGSRLTEFVAGRFAAKEAYSKAVGTGIGKEVSFLDIEVRNDDRGKPILITSTEHIVHLSISHSKEFAVAQVVLESSSR.

2 residues coordinate Mg(2+): Asp-8 and Glu-58.

Belongs to the P-Pant transferase superfamily. AcpS family. It depends on Mg(2+) as a cofactor.

It is found in the cytoplasm. It catalyses the reaction apo-[ACP] + CoA = holo-[ACP] + adenosine 3',5'-bisphosphate + H(+). Its function is as follows. Transfers the 4'-phosphopantetheine moiety from coenzyme A to a Ser of acyl-carrier-protein. The sequence is that of Holo-[acyl-carrier-protein] synthase from Bacillus cereus (strain ZK / E33L).